The following is a 723-amino-acid chain: CSC1-like protein ERD4 (723 aa).

At 1–5 (MEFAS) the chain is on the cytoplasmic side. Residues 6-26 (FLVSLGTSAIIFVVLMFLFTW) traverse the membrane as a helical segment. Topologically, residues 27 to 90 (LSRRPGNVPV…TAVYFVFQST (64 aa)) are extracellular. The helical transmembrane segment at 91-111 (VLGIFALSALLLLPTLLPIAA) threads the bilayer. Residues 112 to 148 (TDNNLETSRSATDTTSNGTFSQLDNLSMANITKSSSR) lie on the Cytoplasmic side of the membrane. Residues 149–169 (LWAFLGAVYWVSVVTYFMLWK) traverse the membrane as a helical segment. Residues 170–364 (AYKHVAALRA…IKFFSRIVRQ (195 aa)) lie on the Extracellular side of the membrane. Residues 365–385 (YVIYFLVAITILFYMIPIAFV) traverse the membrane as a helical segment. Topologically, residues 386 to 416 (SAITTLANLQKALPFLKPIVDIAFIRTILES) are cytoplasmic. A helical transmembrane segment spans residues 417 to 437 (YLPQIALIVFLAMLPKFLMFL). Residues 438–456 (SKSEGIPSQSHAIRATSGK) lie on the Extracellular side of the membrane. Residues 457 to 477 (YFYFSVLNVFIGVTLAGSLFE) traverse the membrane as a helical segment. Over 478–508 (NLKALEEKPNSFITLLATSLPKSATFFLTYV) the chain is Cytoplasmic. Residues 509 to 529 (ALKFFVGYGLELSRIIPLIIF) form a helical membrane-spanning segment. Residues 530–572 (HLKKKYLCKTEAEVKEAWYPGDLSYATRVPSDMLILTITFCYS) lie on the Extracellular side of the membrane. The chain crosses the membrane as a helical span at residues 573–593 (VIAPLILVFGVIYFGLGWLIL). Residues 594-614 (RNQALKVYVPSYESYGRMWPH) lie on the Cytoplasmic side of the membrane. The helical transmembrane segment at 615–635 (IHTRILAALFLFQLVMFGYLG) threads the bilayer. At 636 to 637 (VK) the chain is on the extracellular side. A helical membrane pass occupies residues 638 to 658 (IFVWAILLVPLIFISLIFGYV). Topologically, residues 659 to 723 (CRQKFYGGFE…YQDYAAISAA (65 aa)) are cytoplasmic.

It belongs to the CSC1 (TC 1.A.17) family.

The protein localises to the plastid. Its subcellular location is the chloroplast membrane. In terms of biological role, acts as an osmosensitive calcium-permeable cation channel. This is CSC1-like protein ERD4 (ERD4) from Brassica juncea (Indian mustard).